The primary structure comprises 178 residues: Crossover junction endodeoxyribonuclease RuvC (178 aa).

Catalysis depends on residues D14, E73, and D145. Positions 14, 73, and 145 each coordinate Mg(2+).

It belongs to the RuvC family. As to quaternary structure, homodimer which binds Holliday junction (HJ) DNA. The HJ becomes 2-fold symmetrical on binding to RuvC with unstacked arms; it has a different conformation from HJ DNA in complex with RuvA. In the full resolvosome a probable DNA-RuvA(4)-RuvB(12)-RuvC(2) complex forms which resolves the HJ. Mg(2+) is required as a cofactor.

Its subcellular location is the cytoplasm. It carries out the reaction Endonucleolytic cleavage at a junction such as a reciprocal single-stranded crossover between two homologous DNA duplexes (Holliday junction).. Its function is as follows. The RuvA-RuvB-RuvC complex processes Holliday junction (HJ) DNA during genetic recombination and DNA repair. Endonuclease that resolves HJ intermediates. Cleaves cruciform DNA by making single-stranded nicks across the HJ at symmetrical positions within the homologous arms, yielding a 5'-phosphate and a 3'-hydroxyl group; requires a central core of homology in the junction. The consensus cleavage sequence is 5'-(A/T)TT(C/G)-3'. Cleavage occurs on the 3'-side of the TT dinucleotide at the point of strand exchange. HJ branch migration catalyzed by RuvA-RuvB allows RuvC to scan DNA until it finds its consensus sequence, where it cleaves and resolves the cruciform DNA. The protein is Crossover junction endodeoxyribonuclease RuvC of Nitrosomonas eutropha (strain DSM 101675 / C91 / Nm57).